The sequence spans 364 residues: Probable dual-specificity RNA methyltransferase RlmN (364 aa).

Residue Glu-106 is the Proton acceptor of the active site. A Radical SAM core domain is found at 112–350 (YPQRNTVCIS…SCTVRDTRGR (239 aa)). Cys-119 and Cys-356 are disulfide-bonded. Residues Cys-126, Cys-130, and Cys-133 each contribute to the [4Fe-4S] cluster site. S-adenosyl-L-methionine-binding positions include 177–178 (GE), Ser-211, 234–236 (SLH), and Asn-313. Cys-356 acts as the S-methylcysteine intermediate in catalysis.

The protein belongs to the radical SAM superfamily. RlmN family. Requires [4Fe-4S] cluster as cofactor.

Its subcellular location is the cytoplasm. It catalyses the reaction adenosine(2503) in 23S rRNA + 2 reduced [2Fe-2S]-[ferredoxin] + 2 S-adenosyl-L-methionine = 2-methyladenosine(2503) in 23S rRNA + 5'-deoxyadenosine + L-methionine + 2 oxidized [2Fe-2S]-[ferredoxin] + S-adenosyl-L-homocysteine. It carries out the reaction adenosine(37) in tRNA + 2 reduced [2Fe-2S]-[ferredoxin] + 2 S-adenosyl-L-methionine = 2-methyladenosine(37) in tRNA + 5'-deoxyadenosine + L-methionine + 2 oxidized [2Fe-2S]-[ferredoxin] + S-adenosyl-L-homocysteine. Functionally, specifically methylates position 2 of adenine 2503 in 23S rRNA and position 2 of adenine 37 in tRNAs. This Mycobacterium marinum (strain ATCC BAA-535 / M) protein is Probable dual-specificity RNA methyltransferase RlmN.